The chain runs to 1171 residues: DNA polymerase catalytic subunit (1171 aa).

Disordered stretches follow at residues 647–687, 704–735, and 1149–1171; these read GTPA…PFRT, PGGGAVSSASVGGRAAVSPSETPAEREPEPAP, and VEEEVCESERGGSGLLSSLDSSR. Pro residues predominate over residues 649 to 662; that stretch reads PARPPETPARPPET. Composition is skewed to low complexity over residues 663–674 and 709–725; these read PAAGPSGAAHAG and VSSASVGGRAAVSPSET. Over residues 1149–1158 the composition is skewed to basic and acidic residues; the sequence is VEEEVCESER.

It belongs to the DNA polymerase type-B family.

The protein localises to the host nucleus. It carries out the reaction DNA(n) + a 2'-deoxyribonucleoside 5'-triphosphate = DNA(n+1) + diphosphate. In Tupaia belangeri (Common tree shrew), this protein is DNA polymerase catalytic subunit (DPOL).